A 935-amino-acid chain; its full sequence is Isoleucine--tRNA ligase (935 aa).

The 'HIGH' region motif lies at 58–68; the sequence is PYANGSIHVGH. An L-isoleucyl-5'-AMP-binding site is contributed by Glu558. A 'KMSKS' region motif is present at residues 599-603; that stretch reads KMSKS. Lys602 contributes to the ATP binding site. Cys897, Cys900, Cys917, and Cys920 together coordinate Zn(2+).

It belongs to the class-I aminoacyl-tRNA synthetase family. IleS type 1 subfamily. In terms of assembly, monomer. The cofactor is Zn(2+).

Its subcellular location is the cytoplasm. The catalysed reaction is tRNA(Ile) + L-isoleucine + ATP = L-isoleucyl-tRNA(Ile) + AMP + diphosphate. In terms of biological role, catalyzes the attachment of isoleucine to tRNA(Ile). As IleRS can inadvertently accommodate and process structurally similar amino acids such as valine, to avoid such errors it has two additional distinct tRNA(Ile)-dependent editing activities. One activity is designated as 'pretransfer' editing and involves the hydrolysis of activated Val-AMP. The other activity is designated 'posttransfer' editing and involves deacylation of mischarged Val-tRNA(Ile). This is Isoleucine--tRNA ligase from Francisella tularensis subsp. tularensis (strain SCHU S4 / Schu 4).